A 1076-amino-acid polypeptide reads, in one-letter code: Ribosome quality control complex subunit NEMF (1076 aa).

At Thr7 the chain carries Phosphothreonine. A coiled-coil region spans residues 296-359 (VDEFYSKIEG…LIEMNLQIVD (64 aa)). Position 417 is a phosphoserine (Ser417). The interval 420–453 (EDDDVDGDVNVEKNETEPPKGKKKKQKNKQLQKP) is disordered. Residues 429–439 (NVEKNETEPPK) are compositionally biased toward basic and acidic residues. Residues 440-449 (GKKKKQKNKQ) show a composition bias toward basic residues. Residues 483-514 (AAKKTQKTVEAAEKAFKSAEKKTKQTLKEVQT) are a coiled coil. Acidic residues-rich tracts occupy residues 691–710 (ISEE…EDKE) and 742–754 (LIQE…EGEY). 2 disordered regions span residues 691–715 (ISEE…HETP) and 742–972 (LIQE…DLDQ). Residues Ser747, Ser748, and Ser763 each carry the phosphoserine modification. The segment covering 755–768 (EEVRKDQDSVGEMK) has biased composition (basic and acidic residues). The span at 777–795 (YPDTTIDLSHLQPQRSIQK) shows a compositional bias: polar residues. Ser831 is subject to Phosphoserine. Residues 839–854 (LEGKDKEKESTVHIET) are compositionally biased toward basic and acidic residues. Residues 869-894 (KRGQKSKMKKMKEKYKDQDEEDRELI) are a coiled coil. Residues 870-881 (RGQKSKMKKMKE) are compositionally biased toward basic residues. Residues 937-965 (DNIKKETPFLEVITHELQDFAVDDPHDDK) show a composition bias toward basic and acidic residues.

Belongs to the NEMF family. As to quaternary structure, component of the ribosome quality control complex (RQC), composed of the E3 ubiquitin ligase LTN1, TCF25 and NEMF associated with the 60S ribosomal subunit. The complex probably also contains VCP/p97 and its ubiquitin-binding cofactors. Interacts (via its N-terminus) with XPO1. Expressed in brain, heart, liver, lung, spleen, and skeletal muscle. Also expressed at lower levels in stomach and testis.

It localises to the cytoplasm. Its subcellular location is the cytosol. The protein resides in the nucleus. Its function is as follows. Key component of the ribosome quality control complex (RQC), a ribosome-associated complex that mediates the extraction of incompletely synthesized nascent chains from stalled ribosomes as well as their ubiquitin-mediated proteasomal degradation. Thereby, frees 60S subunit ribosomes from the stalled translation complex and prevents the accumulation of nascent polypeptide chains that are potentially toxic for the cell. Within the RQC complex, NEMF specifically binds stalled 60S ribosomal subunits by recognizing an exposed, nascent chain-conjugated tRNA moiety and promotes the recruitment of LTN1 to stalled 60S subunits. Following binding to stalled 60S ribosomal subunits, NEMF mediates CAT tailing by recruiting alanine-charged tRNA to the A-site and directing the elongation of stalled nascent chains independently of mRNA or 40S subunits, leading to non-templated C-terminal alanine extensions (CAT tails). Mainly recruits alanine-charged tRNAs, but can also other amino acid-charged tRNAs. CAT tailing is required to promote ubiquitination of stalled nascent chains by different E3 ubiquitin-protein ligases. In the canonical RQC pathway (RQC-L), CAT tailing facilitates LTN1-dependent ubiquitination by exposing lysine residues that would otherwise remain buried in the ribosomal exit tunnel. In the alternative RQC pathway (RQC-C) CAT tailing creates an C-degron mainly composed of alanine that is recognized by the CRL2(KLHDC10) and RCHY1/PIRH2 E3 ligases, leading to ubiquitination and degradation of stalled nascent chains. NEMF may also indirectly play a role in nuclear export. This is Ribosome quality control complex subunit NEMF from Homo sapiens (Human).